Consider the following 873-residue polypeptide: Sister chromatid cohesion protein PDS5 homolog C (873 aa).

4 HEAT repeats span residues 53-92 (NALT…ITAP), 99-136 (DQMK…VAKV), 149-187 (ALLI…ESED), and 189-227 (PSEM…KLKT). Positions 266–301 (NEKEDSQGHIKRETEVEKAAEISTPERTDAPKDESG) are enriched in basic and acidic residues. Disordered stretches follow at residues 266-611 (NEKE…LVGS) and 658-873 (SPLD…KRKR). Residue Thr-289 is modified to Phosphothreonine. Residues 303–319 (SGVSNGVAQQNDSSVDT) show a composition bias toward polar residues. Basic and acidic residues predominate over residues 320–334 (DSMKKQDDTGAKDEP). Positions 336-348 (QLDNPRNTDLNNT) are enriched in polar residues. Composition is skewed to basic and acidic residues over residues 349-365 (TEEK…KENE) and 373-394 (DLSK…DSKD). Composition is skewed to polar residues over residues 400-411 (PVDSSVTAATSS) and 418-438 (SVQI…SSPS). A compositionally biased stretch (basic and acidic residues) spans 456–466 (KKKESSTEEVK). A compositionally biased stretch (low complexity) spans 494–510 (KVASSSKTKPTVPPSKK). 2 stretches are compositionally biased toward basic and acidic residues: residues 511-526 (STSE…KKVV) and 535-555 (TKPK…EESL). The segment covering 661–681 (DESELSQDEEAADQTGQEEDA) has biased composition (acidic residues). Over residues 701 to 725 (SSAKKGSGAGSSKAKATPASKSSKT) the composition is skewed to low complexity. The span at 726–746 (SQDDKTASKSKDSKEASREEE) shows a compositional bias: basic and acidic residues. Positions 747 to 757 (ASSEEESEEEE) are enriched in acidic residues. Low complexity-rich tracts occupy residues 795–814 (KATT…PAKS) and 822–831 (KSGSASTPAS). Residues 844 to 853 (ETPKEPEPAT) are compositionally biased toward basic and acidic residues. The segment covering 854 to 866 (KAKSGKSQGSQSK) has biased composition (low complexity).

The protein belongs to the PDS5 family. Interacts with the cohesin complex.

Its subcellular location is the nucleus. In terms of biological role, cohesin cofactor dispensable during the meiotic division but playing an important role in DNA repair by homologous recombination (HR) probably by helping SMC5/SMC6 complex. Regulator of sister chromatid cohesion in mitosis which may stabilize cohesin complex association with chromatin. May couple sister chromatid cohesion during mitosis to DNA replication. Cohesion ensures that chromosome partitioning is accurate in both meiotic and mitotic cells and plays an important role in DNA repair. In Arabidopsis thaliana (Mouse-ear cress), this protein is Sister chromatid cohesion protein PDS5 homolog C.